Here is a 608-residue protein sequence, read N- to C-terminus: 1-deoxy-D-xylulose-5-phosphate synthase (608 aa).

Thiamine diphosphate is bound by residues His-66 and 107–109 (GHA). Asp-138 is a binding site for Mg(2+). Residues 139-140 (GA), Asn-167, Phe-277, and Glu-350 contribute to the thiamine diphosphate site. Residue Asn-167 coordinates Mg(2+).

The protein belongs to the transketolase family. DXPS subfamily. As to quaternary structure, homodimer. Requires Mg(2+) as cofactor. It depends on thiamine diphosphate as a cofactor.

It carries out the reaction D-glyceraldehyde 3-phosphate + pyruvate + H(+) = 1-deoxy-D-xylulose 5-phosphate + CO2. It participates in metabolic intermediate biosynthesis; 1-deoxy-D-xylulose 5-phosphate biosynthesis; 1-deoxy-D-xylulose 5-phosphate from D-glyceraldehyde 3-phosphate and pyruvate: step 1/1. Its function is as follows. Catalyzes the acyloin condensation reaction between C atoms 2 and 3 of pyruvate and glyceraldehyde 3-phosphate to yield 1-deoxy-D-xylulose-5-phosphate (DXP). This Thermotoga maritima (strain ATCC 43589 / DSM 3109 / JCM 10099 / NBRC 100826 / MSB8) protein is 1-deoxy-D-xylulose-5-phosphate synthase.